Reading from the N-terminus, the 130-residue chain is Small ribosomal subunit protein uS9 (130 aa).

Belongs to the universal ribosomal protein uS9 family.

The polypeptide is Small ribosomal subunit protein uS9 (Vibrio cholerae serotype O1 (strain ATCC 39541 / Classical Ogawa 395 / O395)).